Here is a 445-residue protein sequence, read N- to C-terminus: Ribosomal protein uS12 methylthiotransferase RimO (445 aa).

Residues 13–123 (PRVGFVSLGC…VMAAIHHHLP (111 aa)) enclose the MTTase N-terminal domain. Positions 22, 58, 87, 154, 158, and 161 each coordinate [4Fe-4S] cluster. One can recognise a Radical SAM core domain in the interval 140–377 (LTPKHYAYLK…MQQQEIISKQ (238 aa)). Residues 380-445 (AVKKGQQLRV…DIHDLWTEKI (66 aa)) form the TRAM domain.

This sequence belongs to the methylthiotransferase family. RimO subfamily. The cofactor is [4Fe-4S] cluster.

It localises to the cytoplasm. It catalyses the reaction L-aspartate(89)-[ribosomal protein uS12]-hydrogen + (sulfur carrier)-SH + AH2 + 2 S-adenosyl-L-methionine = 3-methylsulfanyl-L-aspartate(89)-[ribosomal protein uS12]-hydrogen + (sulfur carrier)-H + 5'-deoxyadenosine + L-methionine + A + S-adenosyl-L-homocysteine + 2 H(+). Its function is as follows. Catalyzes the methylthiolation of an aspartic acid residue of ribosomal protein uS12. In Nitrosomonas eutropha (strain DSM 101675 / C91 / Nm57), this protein is Ribosomal protein uS12 methylthiotransferase RimO.